Here is a 421-residue protein sequence, read N- to C-terminus: Prenyltransferase asqH2 (421 aa).

Positions 1 to 28 are disordered; the sequence is MDRNSFTAYGPATGAITESGEQENDHTK. Glutamate 105 contributes to the L-tryptophan binding site. Positions 119, 272, 274, 276, and 341 each coordinate substrate.

It belongs to the tryptophan dimethylallyltransferase family.

The enzyme catalyses yaequinolone E + dimethylallyl diphosphate + H2O = [(1'E)-3'-hydroxy-3',7'-dimethylocta-1',6'-dien-1'-yl]-quinolinone B + diphosphate. The protein operates within secondary metabolite biosynthesis. Its pathway is alkaloid biosynthesis. It functions in the pathway mycotoxin biosynthesis. Its function is as follows. Prenyltransferase; part of the gene cluster that mediates the biosynthesis of the aspoquinolone mycotoxins. Within the pathway, the prenyltransferase asqH2 performs the second alkylation with DMAPP at delta(3') double bond to yield a carbenium ion intermediate, which can be attacked by H(2)O to yield a styrenyl quinolone containing a C3'-hydroxyprenyl chain. The first step of the pathway is catalyzed by the nonribosomal peptide synthetase asqK that condenses anthranilic acid and O-methyl-L-tyrosine to produce 4'-methoxycyclopeptin. 4'-methoxycyclopeptin is then converted to 4'-methoxydehydrocyclopeptin by the ketoglutarate-dependent dioxygenase asqJ. AsqJ also converts its first product 4'-methoxydehydrocyclopeptin to 4'-methoxycyclopenin. The following conversion of 4'-methoxycyclopenin into 4'-methoxyviridicatin is catalyzed by the cyclopenase asqI. 4'-methoxyviridicatin is the precursor of quinolone natural products, and is further converted to quinolinone B. The prenyltransferase asqH1 then catalyzes the canonical Friedel-Crafts alkylation of quinolinone B with dimethylallyl cation to yield dimethylallyl quinolone, which is subjected to FAD-dependent dehydrogenation by the FAD-linked oxidoreductase asqF to yield conjugated aryl diene. The delta(3') double bond then serves as the site of the second alkylation with DMAPP catalyzed by the prenyltransferase asqH2 to yield a carbenium ion intermediate, which can be attacked by H(2)O to yield a styrenyl quinolone containing a C3'-hydroxyprenyl chain. The FAD-dependent monooxygenase asqG performs epoxidation of the terminal C7'-C8' olefin. Finally, after dehydratation of the epoxide at C3 by asqC, the quinolone epoxide rearrangement protein asqO catalyzes an enzymatic 3-exo-tet cyclization to yield the cyclopropyl-THF ring system in aspoquinolone. The polypeptide is Prenyltransferase asqH2 (Emericella nidulans (strain FGSC A4 / ATCC 38163 / CBS 112.46 / NRRL 194 / M139) (Aspergillus nidulans)).